Consider the following 202-residue polypeptide: Small ribosomal subunit protein uS5 (202 aa).

An S5 DRBM domain is found at 50-113; the sequence is LKQELLNVNI…REAKLNLIPV (64 aa).

This sequence belongs to the universal ribosomal protein uS5 family. As to quaternary structure, part of the 30S ribosomal subunit. Contacts protein S4.

Functionally, with S4 and S12 plays an important role in translational accuracy. The polypeptide is Small ribosomal subunit protein uS5 (Pyrobaculum arsenaticum (strain DSM 13514 / JCM 11321 / PZ6)).